Reading from the N-terminus, the 142-residue chain is Small heat shock protein IbpB (142 aa).

Positions 26–137 (TAEHQAFPPY…APQRIAISDR (112 aa)) constitute a sHSP domain.

This sequence belongs to the small heat shock protein (HSP20) family. In terms of assembly, homodimer. Forms homomultimers of about 100-150 subunits at optimal growth temperatures. Conformation changes to oligomers at high temperatures or high ionic concentrations. The decrease in size of the multimers is accompanied by an increase in chaperone activity.

Its subcellular location is the cytoplasm. In terms of biological role, associates with aggregated proteins, together with IbpA, to stabilize and protect them from irreversible denaturation and extensive proteolysis during heat shock and oxidative stress. Aggregated proteins bound to the IbpAB complex are more efficiently refolded and reactivated by the ATP-dependent chaperone systems ClpB and DnaK/DnaJ/GrpE. Its activity is ATP-independent. The sequence is that of Small heat shock protein IbpB from Enterobacter sp. (strain 638).